The sequence spans 557 residues: Urocanate hydratase (557 aa).

NAD(+) contacts are provided by residues 53–54, Gln-131, 177–179, 197–202, 243–244, 264–268, 274–275, and 323–324; these read GG, GMG, ECQQSR, NA, QTSAH, YL, and YG. Cys-411 is a catalytic residue. NAD(+)-binding positions include 455–456 and Gly-493; that span reads RE.

Homodimer. NAD(+) is required as a cofactor.

Its subcellular location is the cytoplasm. It carries out the reaction 4-imidazolone-5-propanoate = trans-urocanate + H2O. The protein operates within amino-acid degradation; L-histidine degradation into L-glutamate; N-formimidoyl-L-glutamate from L-histidine: step 2/3. In terms of biological role, catalyzes the conversion of urocanate to 4-imidazolone-5-propionate. This chain is Urocanate hydratase, found in Pseudomonas putida (Arthrobacter siderocapsulatus).